The chain runs to 321 residues: MTVITIAKRGLPKLTTSTSSTTTASSSSTITSVVSSSSSSSSLPLLSNSTSSSIIPSITPPSRNGNPYILDSGDMPNGTVFIIVGGIAGVIFLAILLWWVITTYSSHRLTRSVQDYESKMFSAQHTQFYGDSPYMDYPAKENFQDQVHISESDISPGNKDESVKDALVSHTNNEKPFLSNFERPLSSLVSESNRNSLFISPTGDILNKTRLSKLYQESPRLLQKPVIMTSDNVSTNSLVSTISSSSASSLDNGNEKEVGEDIRKPAKIASSPSRKLLNSPESDGSVNRNHSKGNLLVVQSKRKPTPSTYLEHMLEGKEQDE.

The disordered stretch occupies residues 35–59 (SSSSSSSSLPLLSNSTSSSIIPSIT). Residues 81–101 (FIIVGGIAGVIFLAILLWWVI) form a helical membrane-spanning segment. S132 is subject to Phosphoserine. The span at 241–250 (TISSSSASSL) shows a compositional bias: low complexity. Positions 241 to 321 (TISSSSASSL…HMLEGKEQDE (81 aa)) are disordered. The span at 253–264 (GNEKEVGEDIRK) shows a compositional bias: basic and acidic residues. The span at 279–288 (SPESDGSVNR) shows a compositional bias: polar residues. Phosphoserine occurs at positions 282, 285, and 291. Positions 312-321 (HMLEGKEQDE) are enriched in basic and acidic residues. K317 participates in a covalent cross-link: Glycyl lysine isopeptide (Lys-Gly) (interchain with G-Cter in ubiquitin).

This sequence belongs to the PRM5 family.

The protein resides in the membrane. In Saccharomyces cerevisiae (strain YJM789) (Baker's yeast), this protein is Pheromone-regulated membrane protein 5 (PRM5).